Reading from the N-terminus, the 434-residue chain is Histidine--tRNA ligase (434 aa).

This sequence belongs to the class-II aminoacyl-tRNA synthetase family. Homodimer.

The protein resides in the cytoplasm. The catalysed reaction is tRNA(His) + L-histidine + ATP = L-histidyl-tRNA(His) + AMP + diphosphate + H(+). This Latilactobacillus sakei subsp. sakei (strain 23K) (Lactobacillus sakei subsp. sakei) protein is Histidine--tRNA ligase.